The primary structure comprises 615 residues: MTGSIGQAPAIDKRDFDINRRSSTPHETAAQEDEALLHSRPRSRLSVGNRFSDNDDGLLSDVVEEIVERDRQRMRREVVRVGSFVWGVITCLGAGSITAFSLYGPLLLTRLNYTQLRVNEVSIAAGISMYLPVSLAGYLCDRYSPSPLTLFAGIAFGLGYSLAAFVYKSGPPPDAGGNGWPFWVMVVAFIAIGVATCSMYLAAVTTCAKNFGRGKHKGIILAVPIAAFGLSGMWQSQVGTYFLCERLKDSNCGDVDVYKYFLFLAILLLTIGVIGTFALRIVDDEEEKYIDEAVEELERSGLLAESEFFRPRSEVQAAYGTFSDDHEDNGSVDDQSVTISEELREAARREKEREEEERRKKNWLLNYETRIFLADHTMWWLALGFFLVTGPGEAYLNNLGTIVQTLNLDTTAIVDSHPAGLPSTHVTIIALTSTIARLLTGSLSDLFAPTARRHFTVDQETAGPDPFTKQRPALSRLAFLIPSALLLSLGFLLLASPLPTHHPELSHLTTALVGLGYGSIFSLVPIIISVVWGVENFGTNWGIVAMFPAAGAAMWGVIYSRAYQSAADGSPTDDGQCHGWKCFGFWSIGCTFSVWVAIVAWLVAWTSWRRRGVVV.

Positions 1-35 (MTGSIGQAPAIDKRDFDINRRSSTPHETAAQEDEA) are disordered. Positions 11 to 20 (IDKRDFDINR) are enriched in basic and acidic residues. The helical transmembrane segment at 84 to 104 (FVWGVITCLGAGSITAFSLYG) threads the bilayer. N-linked (GlcNAc...) asparagine glycosylation is present at Asn112. Helical transmembrane passes span 120 to 140 (EVSI…GYLC), 147 to 167 (PLTL…AFVY), 182 to 202 (FWVM…MYLA), 218 to 238 (GIIL…QSQV), and 261 to 281 (FLFL…ALRI). Asn329 carries an N-linked (GlcNAc...) asparagine glycan. A run of 6 helical transmembrane segments spans residues 371–391 (IFLA…VTGP), 428–448 (IIAL…DLFA), 477–497 (LAFL…LASP), 512–532 (LVGL…SVVW), 538–558 (GTNW…WGVI), and 583–603 (FGFW…AWLV).

This sequence belongs to the major facilitator superfamily.

The protein localises to the vacuole membrane. Its function is as follows. Probable transporter. This is Probable transporter mch1 (mch1) from Emericella nidulans (strain FGSC A4 / ATCC 38163 / CBS 112.46 / NRRL 194 / M139) (Aspergillus nidulans).